We begin with the raw amino-acid sequence, 150 residues long: Large ribosomal subunit protein bL9 (150 aa).

It belongs to the bacterial ribosomal protein bL9 family.

Binds to the 23S rRNA. This Lactococcus lactis subsp. cremoris (strain MG1363) protein is Large ribosomal subunit protein bL9.